We begin with the raw amino-acid sequence, 338 residues long: Glycerol-3-phosphate dehydrogenase [NAD(P)+] (338 aa).

S13, W14, and K108 together coordinate NADPH. Sn-glycerol 3-phosphate is bound by residues K108, G139, and S141. Residue A143 participates in NADPH binding. Sn-glycerol 3-phosphate-binding residues include K194, D247, S257, R258, and N259. The Proton acceptor role is filled by K194. R258 provides a ligand contact to NADPH. NADPH-binding residues include V282 and E284.

Belongs to the NAD-dependent glycerol-3-phosphate dehydrogenase family.

It is found in the cytoplasm. It carries out the reaction sn-glycerol 3-phosphate + NAD(+) = dihydroxyacetone phosphate + NADH + H(+). The enzyme catalyses sn-glycerol 3-phosphate + NADP(+) = dihydroxyacetone phosphate + NADPH + H(+). It functions in the pathway membrane lipid metabolism; glycerophospholipid metabolism. Functionally, catalyzes the reduction of the glycolytic intermediate dihydroxyacetone phosphate (DHAP) to sn-glycerol 3-phosphate (G3P), the key precursor for phospholipid synthesis. This is Glycerol-3-phosphate dehydrogenase [NAD(P)+] from Streptococcus pyogenes serotype M12 (strain MGAS9429).